A 460-amino-acid chain; its full sequence is Ribosome biogenesis protein YTM1 (460 aa).

A ubiquitin-like (UBL) domain region spans residues 8–89; it reads VKIRFFTREK…EASLNVEYTR (82 aa). The segment at 99 to 460 is sufficient for interaction with ERB1 and association with 66S pre-ribosomes; sequence SFSNEDWVSS…INKGDNIFKN (362 aa). 7 WD repeats span residues 101 to 140, 142 to 180, 206 to 244, 285 to 325, 327 to 366, 373 to 413, and 424 to 460; these read SNED…QKQY, GHSG…LKLT, GHKA…MTVV, SHTA…CIDT, TTSY…SSKV, GHKN…PMYT, and GVND…IFKN.

It belongs to the WD repeat WDR12/YTM1 family. Component of the NOP7 complex, composed of ERB1, NOP7 and YTM1. The complex is held together by ERB1, which interacts with NOP7 via its N-terminal domain and with YTM1 via a high-affinity interaction between the seven-bladed beta-propeller domains of the 2 proteins. The NOP7 complex associates with the 66S pre-ribosome. Interacts (via UBL domain) with MDN1 (via VWFA/MIDAS domain).

The protein localises to the nucleus. The protein resides in the nucleolus. Its subcellular location is the nucleoplasm. In terms of biological role, component of the NOP7 complex, which is required for maturation of the 25S and 5.8S ribosomal RNAs and formation of the 60S ribosome. In Saccharomyces cerevisiae (strain YJM789) (Baker's yeast), this protein is Ribosome biogenesis protein YTM1.